Reading from the N-terminus, the 58-residue chain is Proteinase inhibitor PSKP-1 (58 aa).

Positions 1 to 58 (VIEPKCYKYEGKKCPPDINPVCGTDKRTYYNECALCVFIRQSTKKADKAIKIKKWGKC) constitute a Kazal-like domain. Disulfide bonds link Cys-6/Cys-36, Cys-14/Cys-33, and Cys-22/Cys-58.

In terms of assembly, monomer. Skin.

The protein localises to the secreted. Has antibacterial activity against Gram-negative bacterium E.coli ATCC 11229. Shows hemagglutinating activity. Inhibits prolyl endopeptidase, but not trypsin, chymotrypsin, V8 protease and proteinase K. May have a role in mucosal defense against microbes by interacting directly with their membranes. In Phyllomedusa sauvagei (Sauvage's leaf frog), this protein is Proteinase inhibitor PSKP-1.